We begin with the raw amino-acid sequence, 189 residues long: Interferon alpha-16 (189 aa).

A signal peptide spans 1–23; it reads MALSFSLLMAVLVLSYKSICSLG. Disulfide bonds link cysteine 24–cysteine 122 and cysteine 52–cysteine 162.

Belongs to the alpha/beta interferon family.

It localises to the secreted. In terms of biological role, produced by macrophages, IFN-alpha have antiviral activities. Interferon stimulates the production of two enzymes: a protein kinase and an oligoadenylate synthetase. This chain is Interferon alpha-16 (IFNA16), found in Homo sapiens (Human).